The following is an 849-amino-acid chain: Trehalose-phosphatase (849 aa).

Positions 1–558 (MPSGAQGNTQ…VKALESHMTT (558 aa)) are glycosyltransferase.

In the N-terminal section; belongs to the glycosyltransferase 20 family. It in the C-terminal section; belongs to the trehalose phosphatase family. Mg(2+) is required as a cofactor.

It localises to the cytoplasm. The protein resides in the nucleus. It catalyses the reaction alpha,alpha-trehalose 6-phosphate + H2O = alpha,alpha-trehalose + phosphate. The protein operates within carbohydrate biosynthesis. In terms of biological role, phosphatase catalytic subunit of the trehalose synthase complex that catalyzes the production of trehalose from glucose-6-phosphate and UDP-glucose in a two step process. In Schizosaccharomyces pombe (strain 972 / ATCC 24843) (Fission yeast), this protein is Trehalose-phosphatase (tps2).